The primary structure comprises 457 residues: Probable ubiquitin carboxyl-terminal hydrolase 16 (457 aa).

The segment at 34-97 (VSSPSVPEGT…DGANDFVDED (64 aa)) is disordered. The span at 45–67 (TVLNNPKQSTVSRKSFSAPTSPT) shows a compositional bias: polar residues. Ser61 is subject to Phosphoserine. A Phosphothreonine modification is found at Thr64. Residue Ser65 is modified to Phosphoserine. In terms of domain architecture, USP spans 125-429 (PGLVNLGNTC…QAYILQYKRK (305 aa)). Cys134 serves as the catalytic Nucleophile. The active-site Proton acceptor is the His388. The disordered stretch occupies residues 434-457 (SKHKLNTENTVTKTSNKKRRKISF). Over residues 448-457 (SNKKRRKISF) the composition is skewed to basic residues.

This sequence belongs to the peptidase C19 family.

The enzyme catalyses Thiol-dependent hydrolysis of ester, thioester, amide, peptide and isopeptide bonds formed by the C-terminal Gly of ubiquitin (a 76-residue protein attached to proteins as an intracellular targeting signal).. In Schizosaccharomyces pombe (strain 972 / ATCC 24843) (Fission yeast), this protein is Probable ubiquitin carboxyl-terminal hydrolase 16 (ubp16).